The primary structure comprises 347 residues: Intracellular hyaluronan-binding protein 4 (347 aa).

Disordered stretches follow at residues 39–221 (GTEK…PSET) and 298–347 (FGSL…PALA). Basic and acidic residues-rich tracts occupy residues 61–71 (VKKESQRDRKT), 83–107 (PGHE…DAEK), 116–125 (RPVDVLDRPA), and 146–174 (DGFD…EKRS). The span at 199 to 213 (EVTENEETQEAVETD) shows a compositional bias: acidic residues. The segment covering 307 to 319 (GGRGGRGGRGRGG) has biased composition (gly residues). Acidic residues predominate over residues 338-347 (DDPEDFPALA).

It belongs to the SERBP1-HABP4 family. In terms of assembly, associates with ribosomes; promoting ribosome stabilization. Interacts with eef2/eEF2; promoting ribosome stabilization.

It is found in the nucleus. The protein localises to the cytoplasm. The protein resides in the stress granule. It localises to the nucleolus. Its subcellular location is the nucleus speckle. It is found in the cajal body. Functionally, ribosome-binding protein that promotes ribosome hibernation, a process during which ribosomes are stabilized in an inactive state and preserved from proteasomal degradation. Acts via its association with eef2/eEF2 factor at the A-site of the ribosome, promoting ribosome stabilization in an inactive state compatible with storage. Plays a key role in ribosome hibernation in the mature egg by promoting ribosome stabilization. Ribosomes, which are produced in large quantities during oogenesis, are stored and translationally repressed in the egg and early embryo. This chain is Intracellular hyaluronan-binding protein 4, found in Danio rerio (Zebrafish).